The chain runs to 320 residues: Phosphatidylserine decarboxylase proenzyme (320 aa).

Residues D90, H147, and S254 each act as charge relay system; for autoendoproteolytic cleavage activity in the active site. S254 functions as the Schiff-base intermediate with substrate; via pyruvic acid; for decarboxylase activity in the catalytic mechanism. S254 is modified (pyruvic acid (Ser); by autocatalysis). The disordered stretch occupies residues E288–G320.

It belongs to the phosphatidylserine decarboxylase family. PSD-B subfamily. Prokaryotic type I sub-subfamily. In terms of assembly, heterodimer of a large membrane-associated beta subunit and a small pyruvoyl-containing alpha subunit. The cofactor is pyruvate. Is synthesized initially as an inactive proenzyme. Formation of the active enzyme involves a self-maturation process in which the active site pyruvoyl group is generated from an internal serine residue via an autocatalytic post-translational modification. Two non-identical subunits are generated from the proenzyme in this reaction, and the pyruvate is formed at the N-terminus of the alpha chain, which is derived from the carboxyl end of the proenzyme. The autoendoproteolytic cleavage occurs by a canonical serine protease mechanism, in which the side chain hydroxyl group of the serine supplies its oxygen atom to form the C-terminus of the beta chain, while the remainder of the serine residue undergoes an oxidative deamination to produce ammonia and the pyruvoyl prosthetic group on the alpha chain. During this reaction, the Ser that is part of the protease active site of the proenzyme becomes the pyruvoyl prosthetic group, which constitutes an essential element of the active site of the mature decarboxylase.

The protein localises to the cell membrane. The catalysed reaction is a 1,2-diacyl-sn-glycero-3-phospho-L-serine + H(+) = a 1,2-diacyl-sn-glycero-3-phosphoethanolamine + CO2. It participates in phospholipid metabolism; phosphatidylethanolamine biosynthesis; phosphatidylethanolamine from CDP-diacylglycerol: step 2/2. Functionally, catalyzes the formation of phosphatidylethanolamine (PtdEtn) from phosphatidylserine (PtdSer). The polypeptide is Phosphatidylserine decarboxylase proenzyme (Klebsiella pneumoniae (strain 342)).